Here is a 1162-residue protein sequence, read N- to C-terminus: Leptin receptor (1162 aa).

The signal sequence occupies residues 1–21; it reads MMCQKFYVVLLHWEFLYVIAA. The Extracellular segment spans residues 22–839; it reads LNLAYPISPW…AIDKQQNDAG (818 aa). Cystine bridges form between cysteine 37–cysteine 90, cysteine 89–cysteine 99, cysteine 131–cysteine 142, cysteine 186–cysteine 195, and cysteine 188–cysteine 193. Residues asparagine 41, asparagine 56, asparagine 73, and asparagine 98 are each glycosylated (N-linked (GlcNAc...) asparagine). An N-linked (GlcNAc...) asparagine glycan is attached at asparagine 187. The Fibronectin type-III 1 domain maps to 238–331; that stretch reads PPLGLHMEVT…SPQVFTTQDV (94 aa). Residues asparagine 275 and asparagine 345 are each glycosylated (N-linked (GlcNAc...) asparagine). Residues 329-427 form the Ig-like domain; that stretch reads QDVVYFPPKI…HRYAELYVID (99 aa). Intrachain disulfides connect cysteine 350-cysteine 410 and cysteine 411-cysteine 416. An N-linked (GlcNAc...) asparagine glycan is attached at asparagine 431. Cystine bridges form between cysteine 434-cysteine 445, cysteine 471-cysteine 526, and cysteine 486-cysteine 496. Residues 465-482 form a leptin-binding region; the sequence is HRRSLYCPDSPSIHPTSE. Residues asparagine 514, asparagine 622, asparagine 657, asparagine 668, asparagine 686, asparagine 695, asparagine 698, and asparagine 726 are each glycosylated (N-linked (GlcNAc...) asparagine). Fibronectin type-III domains lie at 537 to 632, 637 to 729, and 738 to 832; these read PPSN…TLVM, PMRG…NLTF, and AVES…DAID. Residues 620 to 624 carry the WSXWS motif motif; that stretch reads WSNWS. The helical transmembrane segment at 840-860 threads the bilayer; the sequence is LYVIVPIIISSCVLLLGTLLI. The Cytoplasmic segment spans residues 861–1162; that stretch reads SHQRMKKLFW…MENKMCDLTV (302 aa). Residues 869–877 carry the Box 1 motif motif; the sequence is FWDDVPNPK. Serine 880 bears the Phosphoserine mark. Positions 891-896 are required for JAK2 activation; that stretch reads ETFEHL. Residues 896–904 are required for STAT3 phosphorylation; that stretch reads LFTKHAESV. A Phosphotyrosine; by JAK2 modification is found at tyrosine 985. Tyrosine 1077 carries the post-translational modification Phosphotyrosine. Tyrosine 1138 is modified (phosphotyrosine; by JAK2).

Belongs to the type I cytokine receptor family. Type 2 subfamily. As to quaternary structure, present as a mixture of monomers and dimers. The phosphorylated receptor binds a number of SH2 domain-containing proteins such as JAK2, STAT3, PTPN11, and SOCS3. Interaction with SOCS3 inhibits JAK/STAT signaling and MAPK cascade. In terms of processing, on ligand binding, phosphorylated on two conserved C-terminal tyrosine residues (isoform B only) by JAK2. Tyr-985 is required for complete binding and activation of PTPN11, ERK/FOS activation,for interaction with SOCS3 and SOCS3 mediated inhibition of leptin signaling. Phosphorylation on Tyr-1138 is required for STAT3 binding/activation. Phosphorylation of Tyr-1077 has a more accessory role. In terms of tissue distribution, isoform A: highest level of expression in lung and kidney, also present in heart, brain, spleen, liver, muscle, choroid plexus and hypothalamus. Isoform B: highest levels of expression in hypothalamus and lower levels in brain, testes and adipose tissue. Expressed by neurons of the parabrachial nucleus. Expressed by peripheral blood mononuclear cells and CD4(+) T-cells. Isoform E: expressed in adipose tissue, liver, hypothalamus, cerebral microvessels, heart, and testes.

The protein localises to the cell membrane. The protein resides in the basolateral cell membrane. It is found in the secreted. Receptor for hormone LEP/leptin. On ligand binding, mediates LEP central and peripheral effects through the activation of different signaling pathways such as JAK2/STAT3 and MAPK cascade/FOS. In the hypothalamus, LEP acts as an appetite-regulating factor that induces a decrease in food intake and an increase in energy consumption by inducing anorexinogenic factors and suppressing orexigenic neuropeptides, also regulates bone mass and secretion of hypothalamo-pituitary-adrenal hormones. In the periphery, increases basal metabolism, influences reproductive function, regulates pancreatic beta-cell function and insulin secretion, is pro-angiogenic and affects innate and adaptive immunity. Control of energy homeostasis and melanocortin production (stimulation of POMC and full repression of AgRP transcription) is mediated by STAT3 signaling, whereas distinct signals regulate NPY and the control of fertility, growth and glucose homeostasis. Involved in the regulation of counter-regulatory response to hypoglycemia by inhibiting neurons of the parabrachial nucleus. Has a specific effect on T lymphocyte responses, differentially regulating the proliferation of naive and memory T-cells. Leptin increases Th1 and suppresses Th2 cytokine production. In terms of biological role, may transport LEP across the blood-brain barrier. Binds LEP and mediates LEP endocytosis. Does not induce phosphorylation of and activate STAT3. Its function is as follows. Antagonizes Isoform A and isoform B-mediated LEP binding and endocytosis. The protein is Leptin receptor (Lepr) of Mus musculus (Mouse).